The chain runs to 93 residues: Probable chloroethene reductive dehalogenase membrane anchor protein (93 aa).

3 helical membrane-spanning segments follow: residues 3 to 23 (AIYF…FTWF), 35 to 55 (WVLG…TYAS), and 64 to 84 (SAWI…LFAA).

It belongs to the PceB family.

It localises to the cell membrane. Its function is as follows. May act as a membrane anchor for the chloroethene reductive dehalogenase VcrA. This is Probable chloroethene reductive dehalogenase membrane anchor protein from Dehalococcoides mccartyi (strain VS).